Reading from the N-terminus, the 528-residue chain is UDP-glucuronosyltransferase 1A9 (528 aa).

Positions 1 to 23 are cleaved as a signal peptide; sequence MAPVAFPTSFFLCLLLASGLAQA. A glycan (N-linked (GlcNAc...) asparagine) is linked at Asn69. An N6-succinyllysine modification is found at Lys97. N-linked (GlcNAc...) asparagine glycans are attached at residues Asn290 and Asn428. The chain crosses the membrane as a helical span at residues 486–506; the sequence is VIGFLLAIVLTVVFIVFKCCA.

This sequence belongs to the UDP-glycosyltransferase family. Homodimer. Homooligomer. Interacts with UGT1A1, UGT1A3, UGT1A4, UGT1A6, UGT1A7, UGT1A8 and UGT1A10 to form heterodimers. Highly expressed in liver and at lower levels in stomach and kidney.

It localises to the endoplasmic reticulum membrane. The enzyme catalyses glucuronate acceptor + UDP-alpha-D-glucuronate = acceptor beta-D-glucuronoside + UDP + H(+). The catalysed reaction is 2-hydroxy-17beta-estradiol + UDP-alpha-D-glucuronate = 2-hydroxy-17beta-estradiol 3-O-(beta-D-glucuronate) + UDP + H(+). It carries out the reaction 4-hydroxy-17beta-estradiol + UDP-alpha-D-glucuronate = 17beta-estradiol 4-O-(beta-D-glucuronate) + UDP + H(+). It catalyses the reaction 2-hydroxyestrone + UDP-alpha-D-glucuronate = 2-hydroxyestrone 3-O-(beta-D-glucuronate) + UDP + H(+). The enzyme catalyses 4-hydroxyestrone + UDP-alpha-D-glucuronate = estrone 4-O-(beta-D-glucuronate) + UDP + H(+). The catalysed reaction is prunetin + UDP-alpha-D-glucuronate = prunetin-5-O-beta-D-glucuronide + UDP. It carries out the reaction 8-iso-prostaglandin F2alpha + UDP-alpha-D-glucuronate = 8-iso-prostaglandin F2alpha-glucuronide + UDP + H(+). It catalyses the reaction 5-epi-5-F2t-IsoP + UDP-alpha-D-glucuronate = 5-epi-5-F2t-IsoP-glucuronide + UDP + H(+). The enzyme catalyses (5Z,8Z,11Z,14Z)-eicosatetraenoate + UDP-alpha-D-glucuronate = O-[(5Z),(8Z),(11Z),(14Z)-eicosatetraenoyl]-beta-D-glucuronate + UDP. The catalysed reaction is 15-hydroxy-(5Z,8Z,11Z,13E)-eicosatetraenoate + UDP-alpha-D-glucuronate = 15-O-(beta-D-glucuronosyl)-(5Z,8Z,11Z,14Z)-eicosatetraenoate + UDP + H(+). It carries out the reaction prostaglandin B1 + UDP-alpha-D-glucuronate = 15-O-(beta-D-glucuronosyl)-prostaglandin B1 + UDP + H(+). It catalyses the reaction (E)-ferulate + UDP-alpha-D-glucuronate = (E)-4-O-(beta-D-glucuronosyl)-ferulate + UDP + H(+). The enzyme catalyses (E)-ferulate + UDP-alpha-D-glucuronate = (E)-ferulic acid beta-D-glucuronate ester + UDP. The catalysed reaction is candesartan + UDP-alpha-D-glucuronate = candesartan O-beta-D-glucuronoside + UDP. It carries out the reaction SN-38 + UDP-alpha-D-glucuronate = SN-38 O-beta-D-glucuronide + UDP + H(+). It catalyses the reaction mycophenolate + UDP-alpha-D-glucuronate = mycophenolate 7-O-beta-D-glucuronide + UDP + H(+). Functionally, UDP-glucuronosyltransferase (UGT) that catalyzes phase II biotransformation reactions in which lipophilic substrates are conjugated with glucuronic acid to increase the metabolite's water solubility, thereby facilitating excretion into either the urine or bile. Essential for the elimination and detoxification of drugs, xenobiotics and endogenous compounds. Catalyzes the glucuronidation of endogenous estrogen hormones such as estradiol and estrone. Involved in the glucuronidation of arachidonic acid (AA) and AA-derived eicosanoids including 15-HETE, PGB1 and F2-isoprostanes (8-iso-PGF2alpha and 5-epi-5-F2t-IsoP). Glucuronates the phytochemical ferulic acid efficently at both the phenolic or the carboxylic acid group. Also catalyzes the glucuronidation of the isoflavones genistein, daidzein, glycitein, formononetin, biochanin A and prunetin, which are phytoestrogens with anticancer and cardiovascular properties. Involved in the glucuronidation of the AGTR1 angiotensin receptor antagonist caderastan, a drug which can inhibit the effect of angiotensin II. Involved in the biotransformation of 7-ethyl-10-hydroxycamptothecin (SN-38), the pharmacologically active metabolite of the anticancer drug irinotecan. Also metabolizes mycophenolate, an immunosuppressive agent. This Mus musculus (Mouse) protein is UDP-glucuronosyltransferase 1A9.